The chain runs to 406 residues: Bifunctional enzyme IspD/IspF (406 aa).

The tract at residues 1–247 (MSLIRVNGEA…TLFFNPAKDT (247 aa)) is 2-C-methyl-D-erythritol 4-phosphate cytidylyltransferase. Positions 248-406 (FIGMGFDTHA…HVSMRYKQKL (159 aa)) are 2-C-methyl-D-erythritol 2,4-cyclodiphosphate synthase. Residues Asp254 and His256 each contribute to the a divalent metal cation site. Residues 254-256 (DTH) and 280-281 (HS) contribute to the 4-CDP-2-C-methyl-D-erythritol 2-phosphate site. Position 288 (His288) interacts with a divalent metal cation. 4-CDP-2-C-methyl-D-erythritol 2-phosphate-binding positions include 302–304 (DIG), 307–311 (FPDND), 378–381 (TTME), Phe385, and Lys388.

This sequence in the N-terminal section; belongs to the IspD/TarI cytidylyltransferase family. IspD subfamily. The protein in the C-terminal section; belongs to the IspF family. Requires a divalent metal cation as cofactor.

The enzyme catalyses 2-C-methyl-D-erythritol 4-phosphate + CTP + H(+) = 4-CDP-2-C-methyl-D-erythritol + diphosphate. It carries out the reaction 4-CDP-2-C-methyl-D-erythritol 2-phosphate = 2-C-methyl-D-erythritol 2,4-cyclic diphosphate + CMP. The protein operates within isoprenoid biosynthesis; isopentenyl diphosphate biosynthesis via DXP pathway; isopentenyl diphosphate from 1-deoxy-D-xylulose 5-phosphate: step 2/6. Its pathway is isoprenoid biosynthesis; isopentenyl diphosphate biosynthesis via DXP pathway; isopentenyl diphosphate from 1-deoxy-D-xylulose 5-phosphate: step 4/6. Its function is as follows. Bifunctional enzyme that catalyzes the formation of 4-diphosphocytidyl-2-C-methyl-D-erythritol from CTP and 2-C-methyl-D-erythritol 4-phosphate (MEP) (IspD), and catalyzes the conversion of 4-diphosphocytidyl-2-C-methyl-D-erythritol 2-phosphate (CDP-ME2P) to 2-C-methyl-D-erythritol 2,4-cyclodiphosphate (ME-CPP) with a corresponding release of cytidine 5-monophosphate (CMP) (IspF). The chain is Bifunctional enzyme IspD/IspF from Helicobacter pylori (strain ATCC 700392 / 26695) (Campylobacter pylori).